Reading from the N-terminus, the 158-residue chain is NAD(P)H-quinone oxidoreductase subunit J, chloroplastic (158 aa).

The protein belongs to the complex I 30 kDa subunit family. In terms of assembly, NDH is composed of at least 16 different subunits, 5 of which are encoded in the nucleus.

Its subcellular location is the plastid. It localises to the chloroplast thylakoid membrane. It catalyses the reaction a plastoquinone + NADH + (n+1) H(+)(in) = a plastoquinol + NAD(+) + n H(+)(out). The catalysed reaction is a plastoquinone + NADPH + (n+1) H(+)(in) = a plastoquinol + NADP(+) + n H(+)(out). Functionally, NDH shuttles electrons from NAD(P)H:plastoquinone, via FMN and iron-sulfur (Fe-S) centers, to quinones in the photosynthetic chain and possibly in a chloroplast respiratory chain. The immediate electron acceptor for the enzyme in this species is believed to be plastoquinone. Couples the redox reaction to proton translocation, and thus conserves the redox energy in a proton gradient. The chain is NAD(P)H-quinone oxidoreductase subunit J, chloroplastic from Guizotia abyssinica (Niger).